We begin with the raw amino-acid sequence, 259 residues long: Thiazole synthase (259 aa).

The active-site Schiff-base intermediate with DXP is Lys99. 1-deoxy-D-xylulose 5-phosphate contacts are provided by residues Gly160, 186–187, and 208–209; these read AG and NT.

This sequence belongs to the ThiG family. Homotetramer. Forms heterodimers with either ThiH or ThiS.

It is found in the cytoplasm. It catalyses the reaction [ThiS sulfur-carrier protein]-C-terminal-Gly-aminoethanethioate + 2-iminoacetate + 1-deoxy-D-xylulose 5-phosphate = [ThiS sulfur-carrier protein]-C-terminal Gly-Gly + 2-[(2R,5Z)-2-carboxy-4-methylthiazol-5(2H)-ylidene]ethyl phosphate + 2 H2O + H(+). Its pathway is cofactor biosynthesis; thiamine diphosphate biosynthesis. Its function is as follows. Catalyzes the rearrangement of 1-deoxy-D-xylulose 5-phosphate (DXP) to produce the thiazole phosphate moiety of thiamine. Sulfur is provided by the thiocarboxylate moiety of the carrier protein ThiS. In vitro, sulfur can be provided by H(2)S. In Porphyromonas gingivalis (strain ATCC 33277 / DSM 20709 / CIP 103683 / JCM 12257 / NCTC 11834 / 2561), this protein is Thiazole synthase.